The chain runs to 524 residues: Alkaline phosphatase, tissue-nonspecific isozyme (524 aa).

The N-terminal stretch at 1–17 (MISPFLVLAIGTCLTNS) is a signal peptide. Residue Asp-60 participates in Mg(2+) binding. Zn(2+)-binding residues include Asp-60 and Ser-110. Catalysis depends on Ser-110, which acts as the Phosphoserine intermediate. Ser-110 is modified (phosphoserine). Cys-139 and Cys-201 are oxidised to a cystine. N-linked (GlcNAc...) asparagine glycosylation is present at Asn-140. Thr-173 is a binding site for Mg(2+). N-linked (GlcNAc...) asparagine glycosylation occurs at Asn-230. Glu-235 is a binding site for Ca(2+). Residue Asn-271 is glycosylated (N-linked (GlcNAc...) asparagine). Residues Phe-290 and Glu-291 each contribute to the Ca(2+) site. An N-linked (GlcNAc...) asparagine glycan is attached at Asn-303. Asp-306 is a Ca(2+) binding site. Glu-332 provides a ligand contact to Mg(2+). Residues Asp-337, His-341, Asp-378, and His-379 each coordinate Zn(2+). Residue Asn-430 is glycosylated (N-linked (GlcNAc...) asparagine). His-454 lines the Zn(2+) pocket. Cys-489 and Cys-497 are oxidised to a cystine. Residue Gly-501 is the site of GPI-anchor amidated glycine attachment. Positions 502 to 524 (SGSAPSPGALLLPLAVLSLRTLF) are cleaved as a propeptide — removed in mature form.

The protein belongs to the alkaline phosphatase family. In terms of assembly, homodimer. Mg(2+) serves as cofactor. It depends on Zn(2+) as a cofactor. Requires Ca(2+) as cofactor. N-glycosylated. Widely expressed. Expressed in DRG neurons and spinal cord neurons.

Its subcellular location is the cell membrane. The protein localises to the extracellular vesicle membrane. The protein resides in the mitochondrion membrane. It localises to the mitochondrion intermembrane space. The catalysed reaction is a phosphate monoester + H2O = an alcohol + phosphate. The enzyme catalyses diphosphate + H2O = 2 phosphate + H(+). It catalyses the reaction pyridoxal 5'-phosphate + H2O = pyridoxal + phosphate. It carries out the reaction phosphoethanolamine + H2O = ethanolamine + phosphate. The catalysed reaction is N-phosphocreatine + H2O = creatine + phosphate. The enzyme catalyses ATP + H2O = ADP + phosphate + H(+). It catalyses the reaction ADP + H2O = AMP + phosphate + H(+). It carries out the reaction AMP + H2O = adenosine + phosphate. Its activity is regulated as follows. Phosphatase activity is specifically inhibited by 5-((5-chloro-2-methoxyphenyl)sulfonamido)nicotinamide (SBI-425). Its function is as follows. Alkaline phosphatase that metabolizes various phosphate compounds and plays a key role in skeletal mineralization and adaptive thermogenesis. Has broad substrate specificity and can hydrolyze a considerable variety of compounds: however, only a few substrates, such as diphosphate (inorganic pyrophosphate; PPi), pyridoxal 5'-phosphate (PLP) and N-phosphocreatine are natural substrates. Plays an essential role in skeletal and dental mineralization via its ability to hydrolyze extracellular diphosphate, a potent mineralization inhibitor, to phosphate: it thereby promotes hydroxyapatite crystal formation and increases inorganic phosphate concentration. Acts in a non-redundant manner with PHOSPHO1 in skeletal mineralization: while PHOSPHO1 mediates the initiation of hydroxyapatite crystallization in the matrix vesicles (MVs), ALPL/TNAP catalyzes the spread of hydroxyapatite crystallization in the extracellular matrix. Also promotes dephosphorylation of osteopontin (SSP1), an inhibitor of hydroxyapatite crystallization in its phosphorylated state; it is however unclear whether ALPL/TNAP mediates SSP1 dephosphorylation via a direct or indirect manner. Catalyzes dephosphorylation of PLP to pyridoxal (PL), the transportable form of vitamin B6, in order to provide a sufficient amount of PLP in the brain, an essential cofactor for enzymes catalyzing the synthesis of diverse neurotransmitters. Additionally, also able to mediate ATP degradation in a stepwise manner to adenosine, thereby regulating the availability of ligands for purinergic receptors. Also capable of dephosphorylating microbial products, such as lipopolysaccharides (LPS) as well as other phosphorylated small-molecules, such as poly-inosine:cytosine (poly I:C). Acts as a key regulator of adaptive thermogenesis as part of the futile creatine cycle: localizes to the mitochondria of thermogenic fat cells and acts by mediating hydrolysis of N-phosphocreatine to initiate a futile cycle of creatine dephosphorylation and phosphorylation. During the futile creatine cycle, creatine and N-phosphocreatine are in a futile cycle, which dissipates the high energy charge of N-phosphocreatine as heat without performing any mechanical or chemical work. The chain is Alkaline phosphatase, tissue-nonspecific isozyme from Mus musculus (Mouse).